Here is a 459-residue protein sequence, read N- to C-terminus: MRCGGGARACRRACRCWLSGYAGPADGTQQPDAPEHAVAREALVDLCRRRHFFSGTPQQLSTAALLSGCHARFGPLGVELRKNLASQWWSSMVVFREQVFAVDSLHQEPGSSQPRDSAFRLVSPESIREILQDREPSKEQLVAFLENLLKTSGKLRATLLHGALEHYVNCLDLVNRKLPFGLAQIGVCFHPVSNSNQTPSSVTRVGEKTEASLVWFTPTRTSSQWLDFWLRHRLLWWRKFAMSPSNFSSADCQDELGRKGSKLYYSFPWGKEPIETLWNLGDQELLHTYPGNVSTIQGRDGRKNVVPCVLSVSGDVDLGTLAYLYDSFQLAENSFARKKSLQRKVLKLHPCLAPIKVALDVGKGPTVELRQVCQGLLNELLENGISVWPGYSETVHSSLEQLHSKYDEMSVLFSVLVTETTLENGLIQLRSRDTTMKEMMHISKLRDFLVKYLASASNV.

Heterotrimer composed of a catalytic subunit and a homodimer of accessory subunits (POLG:POLG2).

Its subcellular location is the mitochondrion. It localises to the mitochondrion matrix. The protein localises to the mitochondrion nucleoid. Its function is as follows. Accessory subunit of DNA polymerase gamma solely responsible for replication of mitochondrial DNA (mtDNA). Acts as an allosteric regulator of the holoenzyme activities. Enhances the polymerase activity and the processivity of POLG by increasing its interactions with the DNA template. Suppresses POLG exonucleolytic proofreading especially toward homopolymeric templates bearing mismatched termini. Binds to single-stranded DNA. This chain is DNA polymerase subunit gamma-2 (Polg2), found in Mus musculus (Mouse).